The primary structure comprises 599 residues: Sulfite reductase [NADPH] flavoprotein alpha-component (599 aa).

One can recognise a Flavodoxin-like domain in the interval 64-202; sequence ITLISASQTG…VAAQWRARIV (139 aa). FMN is bound by residues 70-75, 117-120, and 153-162; these read SQTGNA, STQG, and LGDTSYEFFC. Residues 234–448 form the FAD-binding FR-type domain; sequence EAPLRASLSV…IEHNDNFRLP (215 aa). Residues Thr322, Ala356, 386-389, 404-406, Tyr410, and 419-422 each bind FAD; these read RLYS, TVG, and GGAS. NADP(+) contacts are provided by residues 519–520, 525–529, and Asp561; these read SR and KIYVQ. An FAD-binding site is contributed by Tyr599.

Belongs to the NADPH-dependent sulphite reductase flavoprotein subunit CysJ family. This sequence in the N-terminal section; belongs to the flavodoxin family. It in the C-terminal section; belongs to the flavoprotein pyridine nucleotide cytochrome reductase family. As to quaternary structure, alpha(8)-beta(8). The alpha component is a flavoprotein, the beta component is a hemoprotein. FAD is required as a cofactor. The cofactor is FMN.

The enzyme catalyses hydrogen sulfide + 3 NADP(+) + 3 H2O = sulfite + 3 NADPH + 4 H(+). It participates in sulfur metabolism; hydrogen sulfide biosynthesis; hydrogen sulfide from sulfite (NADPH route): step 1/1. Functionally, component of the sulfite reductase complex that catalyzes the 6-electron reduction of sulfite to sulfide. This is one of several activities required for the biosynthesis of L-cysteine from sulfate. The flavoprotein component catalyzes the electron flow from NADPH -&gt; FAD -&gt; FMN to the hemoprotein component. This is Sulfite reductase [NADPH] flavoprotein alpha-component from Salmonella arizonae (strain ATCC BAA-731 / CDC346-86 / RSK2980).